The following is a 260-amino-acid chain: 4-hydroxy-tetrahydrodipicolinate reductase (260 aa).

NAD(+) is bound by residues 12–17 (GFRGKM), 92–94 (GTT), and 118–121 (APNF). The Proton donor/acceptor role is filled by histidine 148. Histidine 149 lines the (S)-2,3,4,5-tetrahydrodipicolinate pocket. Catalysis depends on lysine 152, which acts as the Proton donor. 158–159 (GT) is a (S)-2,3,4,5-tetrahydrodipicolinate binding site.

The protein belongs to the DapB family.

It is found in the cytoplasm. The catalysed reaction is (S)-2,3,4,5-tetrahydrodipicolinate + NAD(+) + H2O = (2S,4S)-4-hydroxy-2,3,4,5-tetrahydrodipicolinate + NADH + H(+). It catalyses the reaction (S)-2,3,4,5-tetrahydrodipicolinate + NADP(+) + H2O = (2S,4S)-4-hydroxy-2,3,4,5-tetrahydrodipicolinate + NADPH + H(+). The protein operates within amino-acid biosynthesis; L-lysine biosynthesis via DAP pathway; (S)-tetrahydrodipicolinate from L-aspartate: step 4/4. In terms of biological role, catalyzes the conversion of 4-hydroxy-tetrahydrodipicolinate (HTPA) to tetrahydrodipicolinate. The chain is 4-hydroxy-tetrahydrodipicolinate reductase from Lactococcus lactis subsp. cremoris (strain SK11).